The chain runs to 413 residues: Inactive squalene synthase 2 (413 aa).

Gly-2 bears the N-acetylglycine mark. Transmembrane regions (helical) follow at residues 283-303 (AIFQSCAIPQIVAIGTLALCY) and 390-410 (AIFVVMFVLLLAIVVVYLKAN).

Belongs to the phytoene/squalene synthase family. It depends on Mg(2+) as a cofactor. Mn(2+) is required as a cofactor. As to expression, mostly expressed in hypocotyls, leaves and cotyledons, and, to a lower extent, in stems.

It localises to the endoplasmic reticulum membrane. In Arabidopsis thaliana (Mouse-ear cress), this protein is Inactive squalene synthase 2.